The following is a 61-amino-acid chain: Small ribosomal subunit protein bS21 (61 aa).

The tract at residues 40–61 is disordered; sequence KPSVKRKKKSEAARKRKNKRRF. Positions 43–61 are enriched in basic residues; it reads VKRKKKSEAARKRKNKRRF.

The protein belongs to the bacterial ribosomal protein bS21 family.

This chain is Small ribosomal subunit protein bS21, found in Ligilactobacillus salivarius (strain UCC118) (Lactobacillus salivarius).